Here is a 266-residue protein sequence, read N- to C-terminus: Non-structural maintenance of chromosomes element 1 homolog (266 aa).

Positions 1-102 (MQGNTRRTGV…SVSKMASDFA (102 aa)) are interaction with NSMCE3. The segment at 191-232 (CNICRSLLIQGQSCETCGIRMHLPCVAKYFQSSSEPHCPHCN) adopts an RING-type; atypical zinc-finger fold. A compositionally biased stretch (basic and acidic residues) spans 243 to 252 (FDPEKERETG). Residues 243-266 (FDPEKERETGMSRSNKRPSRSRQH) are disordered. Residues 256-266 (SNKRPSRSRQH) are compositionally biased toward basic residues.

It belongs to the NSE1 family. In terms of assembly, component of the SMC5-SMC6 complex which consists at least of SMC5, SMC6, NSMCE2, NSMCE1, NSMCE4A or EID3 and NSMCE3. NSMCE1, NSMCE4A or EID3 and NSMCE3 probably form a subcomplex that bridges the head domains of the SMC5-SMC6 heterodimer. Interacts with NSMCE3. In terms of processing, ubiquitinated.

The protein localises to the nucleus. It localises to the chromosome. It is found in the telomere. The catalysed reaction is S-ubiquitinyl-[E2 ubiquitin-conjugating enzyme]-L-cysteine + [acceptor protein]-L-lysine = [E2 ubiquitin-conjugating enzyme]-L-cysteine + N(6)-ubiquitinyl-[acceptor protein]-L-lysine.. Functionally, RING-type zinc finger-containing E3 ubiquitin ligase that assembles with melanoma antigen protein (MAGE) to catalyze the direct transfer of ubiquitin from E2 ubiquitin-conjugating enzyme to a specific substrate. Within MAGE-RING ubiquitin ligase complex, MAGE stimulates and specifies ubiquitin ligase activity likely through recruitment and/or stabilization of the E2 ubiquitin-conjugating enzyme at the E3:substrate complex. Involved in maintenance of genome integrity, DNA damage response and DNA repair. NSMCE3/MAGEG1 and NSMCE1 ubiquitin ligase are components of SMC5-SMC6 complex and may positively regulate homologous recombination-mediated DNA repair. In Bos taurus (Bovine), this protein is Non-structural maintenance of chromosomes element 1 homolog (NSMCE1).